The sequence spans 191 residues: RRP15-like protein (191 aa).

Over residues 1–11 (MSTKNRDRLVV) the composition is skewed to basic and acidic residues. A disordered region spans residues 1-52 (MSTKNRDRLVVTEDSDDDNEREEMSSGGESGEEGPSSVDGGAGDADETVAFP). The stretch at 53–84 (AIERRKKKVIKKLTKKEQSLKKSVKEYRIKLA) forms a coiled coil. Residues 119–153 (QKTMSDAVKEKMTARERREARQRFDGKNFDSDRFA) show a composition bias toward basic and acidic residues. Positions 119–191 (QKTMSDAVKE…IDTGNYSDED (73 aa)) are disordered. Residues 166–191 (GEDDDGEDQMDIGEEQIDTGNYSDED) show a composition bias toward acidic residues.

Belongs to the RRP15 family.

In Caenorhabditis elegans, this protein is RRP15-like protein.